A 225-amino-acid polypeptide reads, in one-letter code: Cytidylate kinase (225 aa).

Residue 12–20 (GPSGAGKGT) coordinates ATP.

It belongs to the cytidylate kinase family. Type 1 subfamily.

The protein localises to the cytoplasm. It catalyses the reaction CMP + ATP = CDP + ADP. The catalysed reaction is dCMP + ATP = dCDP + ADP. The chain is Cytidylate kinase from Pectobacterium carotovorum subsp. carotovorum (strain PC1).